The following is a 166-amino-acid chain: 3-isopropylmalate dehydratase small subunit 1 (166 aa).

Belongs to the LeuD family. LeuD type 2 subfamily. Heterodimer of LeuC and LeuD.

The catalysed reaction is (2R,3S)-3-isopropylmalate = (2S)-2-isopropylmalate. It participates in amino-acid biosynthesis; L-leucine biosynthesis; L-leucine from 3-methyl-2-oxobutanoate: step 2/4. Its function is as follows. Catalyzes the isomerization between 2-isopropylmalate and 3-isopropylmalate, via the formation of 2-isopropylmaleate. This chain is 3-isopropylmalate dehydratase small subunit 1 (leuD1), found in Thermotoga maritima (strain ATCC 43589 / DSM 3109 / JCM 10099 / NBRC 100826 / MSB8).